The chain runs to 336 residues: tRNA(Ile)-lysidine synthase (336 aa).

Residue 21–26 participates in ATP binding; sequence SGGLDS.

It belongs to the tRNA(Ile)-lysidine synthase family.

Its subcellular location is the cytoplasm. It carries out the reaction cytidine(34) in tRNA(Ile2) + L-lysine + ATP = lysidine(34) in tRNA(Ile2) + AMP + diphosphate + H(+). Ligates lysine onto the cytidine present at position 34 of the AUA codon-specific tRNA(Ile) that contains the anticodon CAU, in an ATP-dependent manner. Cytidine is converted to lysidine, thus changing the amino acid specificity of the tRNA from methionine to isoleucine. In Helicobacter pylori (strain ATCC 700392 / 26695) (Campylobacter pylori), this protein is tRNA(Ile)-lysidine synthase.